The chain runs to 209 residues: Thymidylate kinase (209 aa).

Gly11–Thr18 provides a ligand contact to ATP.

This sequence belongs to the thymidylate kinase family.

The enzyme catalyses dTMP + ATP = dTDP + ADP. Phosphorylation of dTMP to form dTDP in both de novo and salvage pathways of dTTP synthesis. The sequence is that of Thymidylate kinase from Streptococcus thermophilus (strain ATCC BAA-250 / LMG 18311).